Reading from the N-terminus, the 213-residue chain is 3-demethoxyubiquinol 3-hydroxylase (213 aa).

Fe cation is bound by residues Glu62, Glu92, His95, Glu144, Glu176, and His179.

This sequence belongs to the COQ7 family. It depends on Fe cation as a cofactor.

The protein resides in the cell membrane. The enzyme catalyses a 5-methoxy-2-methyl-3-(all-trans-polyprenyl)benzene-1,4-diol + AH2 + O2 = a 3-demethylubiquinol + A + H2O. The protein operates within cofactor biosynthesis; ubiquinone biosynthesis. Functionally, catalyzes the hydroxylation of 2-nonaprenyl-3-methyl-6-methoxy-1,4-benzoquinol during ubiquinone biosynthesis. The polypeptide is 3-demethoxyubiquinol 3-hydroxylase (Legionella pneumophila subsp. pneumophila (strain Philadelphia 1 / ATCC 33152 / DSM 7513)).